Reading from the N-terminus, the 140-residue chain is Small ribosomal subunit protein eS12 (140 aa).

This sequence belongs to the eukaryotic ribosomal protein eS12 family. In terms of assembly, part of the small subunit (SSU) processome, composed of more than 70 proteins and the RNA chaperone small nucleolar RNA (snoRNA) U3. Subunit of the 40S ribosomal complex.

The protein resides in the nucleus. The protein localises to the nucleolus. In terms of biological role, part of the small subunit (SSU) processome, first precursor of the small eukaryotic ribosomal subunit. During the assembly of the SSU processome in the nucleolus, many ribosome biogenesis factors, an RNA chaperone and ribosomal proteins associate with the nascent pre-rRNA and work in concert to generate RNA folding, modifications, rearrangements and cleavage as well as targeted degradation of pre-ribosomal RNA by the RNA exosome. Subunit of the 40S ribosomal complex. Involved in cold-warm shock-induced translocation of the RNA exosome components from the nucleolus to nucleoplasm. In Caenorhabditis elegans, this protein is Small ribosomal subunit protein eS12 (rps-12).